Consider the following 403-residue polypeptide: Coenzyme A biosynthesis bifunctional protein CoaBC (403 aa).

The interval 1-197 (MISEIMHPTK…GNNLKKEGNR (197 aa)) is phosphopantothenoylcysteine decarboxylase. Residues 198–403 (VLILNGGTVE…VEKVKKLVKS (206 aa)) are phosphopantothenate--cysteine ligase. Residues D285, K294, and F327 each coordinate CTP.

The protein in the N-terminal section; belongs to the HFCD (homo-oligomeric flavin containing Cys decarboxylase) superfamily. This sequence in the C-terminal section; belongs to the PPC synthetase family. Homododecamer. The CoaC domain is responsible for dodecamer formation. It depends on Mg(2+) as a cofactor. FMN is required as a cofactor.

The enzyme catalyses N-[(R)-4-phosphopantothenoyl]-L-cysteine + H(+) = (R)-4'-phosphopantetheine + CO2. It catalyses the reaction (R)-4'-phosphopantothenate + L-cysteine + CTP = N-[(R)-4-phosphopantothenoyl]-L-cysteine + CMP + diphosphate + H(+). The protein operates within cofactor biosynthesis; coenzyme A biosynthesis. Catalyzes two sequential steps in the biosynthesis of coenzyme A. In the first step cysteine is conjugated to 4'-phosphopantothenate to form 4-phosphopantothenoylcysteine. In the second step the latter compound is decarboxylated to form 4'-phosphopantotheine. The chain is Coenzyme A biosynthesis bifunctional protein CoaBC from Methanocaldococcus jannaschii (strain ATCC 43067 / DSM 2661 / JAL-1 / JCM 10045 / NBRC 100440) (Methanococcus jannaschii).